The following is a 294-amino-acid chain: Putative pyruvate, phosphate dikinase regulatory protein (294 aa).

Residue Gly-156–Thr-163 participates in ADP binding.

Belongs to the pyruvate, phosphate/water dikinase regulatory protein family. PDRP subfamily.

It catalyses the reaction N(tele)-phospho-L-histidyl/L-threonyl-[pyruvate, phosphate dikinase] + ADP = N(tele)-phospho-L-histidyl/O-phospho-L-threonyl-[pyruvate, phosphate dikinase] + AMP + H(+). It carries out the reaction N(tele)-phospho-L-histidyl/O-phospho-L-threonyl-[pyruvate, phosphate dikinase] + phosphate + H(+) = N(tele)-phospho-L-histidyl/L-threonyl-[pyruvate, phosphate dikinase] + diphosphate. Bifunctional serine/threonine kinase and phosphorylase involved in the regulation of the pyruvate, phosphate dikinase (PPDK) by catalyzing its phosphorylation/dephosphorylation. The protein is Putative pyruvate, phosphate dikinase regulatory protein of Cutibacterium acnes (strain DSM 16379 / KPA171202) (Propionibacterium acnes).